We begin with the raw amino-acid sequence, 108 residues long: Nitrite reductase (NADH) small subunit (108 aa).

As to quaternary structure, associates with NirB.

The protein localises to the cytoplasm. The catalysed reaction is NH4(+) + 3 NAD(+) + 2 H2O = nitrite + 3 NADH + 5 H(+). Functionally, required for activity of the reductase. The protein is Nitrite reductase (NADH) small subunit (nirD) of Salmonella typhi.